Here is an 81-residue protein sequence, read N- to C-terminus: Probable antitoxin MazE2 (81 aa).

Forms a complex with cognate toxin MazF2.

In terms of biological role, antitoxin component of a type II toxin-antitoxin (TA) system. This chain is Probable antitoxin MazE2 (mazE2), found in Mycobacterium tuberculosis (strain ATCC 25618 / H37Rv).